The chain runs to 376 residues: Thiol-disulfide oxidoreductase LTO1 (376 aa).

Residues Met1–Lys45 constitute a chloroplast transit peptide. Positions Ile44–Ser77 are disordered. Topologically, residues Cys46–Asn81 are stromal. The span at Ser57–Ser77 shows a compositional bias: low complexity. Residues Trp82–Val102 traverse the membrane as a helical segment. Residues Thr103–Ala125 lie on the Lumenal side of the membrane. Cys109 and Cys116 are oxidised to a cystine. The chain crosses the membrane as a helical span at residues Val126 to Leu146. Residues Ser147 to Arg165 are Stromal-facing. Residues Phe166–Leu186 form a helical membrane-spanning segment. The Lumenal portion of the chain corresponds to Ser187–Gly192. Residues Ser193 to Val213 traverse the membrane as a helical segment. A disulfide bridge links Cys195 with Cys198. At Lys214–Gln223 the chain is on the stromal side. Residues Val224–Ser244 traverse the membrane as a helical segment. Residues Thr245–Gln376 lie on the Lumenal side of the membrane. 2 disulfide bridges follow: Cys293-Cys296 and Cys316-Cys331.

It belongs to the VKOR family. In terms of assembly, interacts with the PSII subunits PSBO1 and PSBO2. Interacts with TL17, TL20.3, HCF164, PETJ, VDE1, EDA3, FKBP13 and FKBP20-2. Expressed in cotyledons, rosette leaves, stems, cauline leaves and flowers.

It is found in the plastid. It localises to the chloroplast thylakoid membrane. Functionally, thiol-disulfide oxidoreductase catalyzing disulfide bond formation of chloroplast proteins and involved in redox regulation and photosynthetic electron transport. Required for the assembly of photosystem II (PSII) through the formation of disulfide bond in PSBO, a subunit of the PSII oxygen-evolving complex in the thylakoid lumen. Involved in the formation of disulfide bonds in the lumenal protein FKBP13. In vitro, reduces phylloquinone (vitamin K1) and menaquinone (vitamin K2) to their respective quinol. Cannot reduce phylloquinone epoxide to phylloquinone. Plays an important role in regulating the thylakoid lumen redox. This chain is Thiol-disulfide oxidoreductase LTO1, found in Arabidopsis thaliana (Mouse-ear cress).